Here is a 456-residue protein sequence, read N- to C-terminus: DEAD-box ATP-dependent RNA helicase 10 (456 aa).

The Q motif signature appears at 9–37; that stretch reads KTFAELGVREELVKACERLGWKNPSKIQA. Positions 40-223 constitute a Helicase ATP-binding domain; sequence LPFALEGKDV…RACLRNPVKI (184 aa). Position 53–60 (53–60) interacts with ATP; sequence AQTGSGKT. The DEAD box signature appears at 171-174; that stretch reads DEAD. Positions 250–394 constitute a Helicase C-terminal domain; sequence YLVYILSEMP…EYPAEEDEVL (145 aa). The disordered stretch occupies residues 407-456; the sequence is SAMNMKESGGRKRRGEDDEESERFLGGNKDRGNKERGGNKDKKSSKKFKR. The span at 434 to 448 shows a compositional bias: basic and acidic residues; sequence NKDRGNKERGGNKDK.

It belongs to the DEAD box helicase family. DDX47/RRP3 subfamily. As to expression, expressed in all tissues and organs examined including root, cotyledon, first and second leaves, third and fourth leaves, fifth and sixth leaves, shoot apex, flower, flower bud, cauline leaf and rosette leaves.

It is found in the nucleus. The protein localises to the nucleolus. It carries out the reaction ATP + H2O = ADP + phosphate + H(+). Involved in leaf polarity establishment by functioning cooperatively with AS2 to repress abaxial genes ARF3, ARF4, KAN1, KAN2, YAB1 and YAB5, and the knox homeobox genes KNAT1, KNAT2, KNAT6, and STM to promote adaxial development in leaf primordia at shoot apical meristems at high temperatures. Involved in the processing of pre-rRNA intermediates at high temperatures. This is DEAD-box ATP-dependent RNA helicase 10 (RH10) from Arabidopsis thaliana (Mouse-ear cress).